Reading from the N-terminus, the 339-residue chain is SVP1-like protein 2 (339 aa).

WD repeat units lie at residues 177 to 217 and 222 to 261; these read AHAN…LVRE and LDRT…ENKR.

This sequence belongs to the WD repeat PROPPIN family.

The protein localises to the vacuole membrane. It localises to the cytoplasmic vesicle membrane. Its function is as follows. Involved in mitochondrial or peroxisomal functions and amino acid signaling pathways. The sequence is that of SVP1-like protein 2 (HSV2) from Kluyveromyces lactis (strain ATCC 8585 / CBS 2359 / DSM 70799 / NBRC 1267 / NRRL Y-1140 / WM37) (Yeast).